The sequence spans 247 residues: GTP cyclohydrolase 1 type 2 homolog (247 aa).

Positions 63, 64, 101, 215, and 219 each coordinate a divalent metal cation.

This sequence belongs to the GTP cyclohydrolase I type 2/NIF3 family. Homohexamer.

In Yersinia pestis, this protein is GTP cyclohydrolase 1 type 2 homolog.